A 692-amino-acid polypeptide reads, in one-letter code: Elongation factor G (692 aa).

The 275-residue stretch at 8 to 282 (ENTRNIGIMA…AVIDYLPSPL (275 aa)) folds into the tr-type G domain. GTP contacts are provided by residues 17-24 (AHIDAGKT), 81-85 (DTPGH), and 135-138 (NKMD).

The protein belongs to the TRAFAC class translation factor GTPase superfamily. Classic translation factor GTPase family. EF-G/EF-2 subfamily.

Its subcellular location is the cytoplasm. Catalyzes the GTP-dependent ribosomal translocation step during translation elongation. During this step, the ribosome changes from the pre-translocational (PRE) to the post-translocational (POST) state as the newly formed A-site-bound peptidyl-tRNA and P-site-bound deacylated tRNA move to the P and E sites, respectively. Catalyzes the coordinated movement of the two tRNA molecules, the mRNA and conformational changes in the ribosome. The sequence is that of Elongation factor G from Bacillus cereus (strain ZK / E33L).